A 189-amino-acid polypeptide reads, in one-letter code: Small ribosomal subunit protein uS5 (189 aa).

An S5 DRBM domain is found at Phe-22 to Val-85.

The protein belongs to the universal ribosomal protein uS5 family. As to quaternary structure, part of the 30S ribosomal subunit. Contacts proteins S4 and S8.

Its function is as follows. With S4 and S12 plays an important role in translational accuracy. Located at the back of the 30S subunit body where it stabilizes the conformation of the head with respect to the body. This chain is Small ribosomal subunit protein uS5, found in Rhizobium etli (strain CIAT 652).